The chain runs to 457 residues: MGSDRWKNIRGTPQMEDSVQEKSQRKGCGYILCTVLLSVAVLLAVTVTGAVLFMNQYHAPSTEPPPVITTNMEDPNALVTIERADSSHINIFIDPNCPDTFPRLEGLQSTMLSALADHDSEQKMAGGKERALLTSLSDQVAQMVSQVARQRADWENVKKVQNGLGTEIGALKNEQGRLIKLLSEGQSHVAQLGSSVSEVLETVQRELGSGRPRLKADLQRAPSRSARPRGCANGSKPRDCYDIYMSGQQEDGVYSVFPIHYPSGFQVFCDMTTDGGGWTVFQRREDGSVNFFQGWEQYRDGFGKLTGEHWLGLQGIHLLTMQAHYQLRIDLEDFDNATAYAVYNTFGVGLFSVNPEEDGYPITVSDYTGTAGDSLGKHSGMKFTTKDLDNDHSENNCATFYHGAWWYRNCHTSNLNGQYLRGHHASYADGIEWSSWTGWQYSLKFTEMKIRPQREEN.

The segment at 1-21 (MGSDRWKNIRGTPQMEDSVQE) is disordered. Topologically, residues 1–33 (MGSDRWKNIRGTPQMEDSVQEKSQRKGCGYILC) are cytoplasmic. The helical; Signal-anchor for type II membrane protein transmembrane segment at 34–54 (TVLLSVAVLLAVTVTGAVLFM) threads the bilayer. The Extracellular segment spans residues 55-457 (NQYHAPSTEP…MKIRPQREEN (403 aa)). One can recognise a Fibrinogen C-terminal domain in the interval 231–454 (CANGSKPRDC…FTEMKIRPQR (224 aa)). An N-linked (GlcNAc...) asparagine glycan is attached at N233. C240 and C269 form a disulfide bridge. N-linked (GlcNAc...) asparagine glycosylation is present at N336. Residues D389 and D391 each coordinate Ca(2+). C397 and C410 form a disulfide bridge.

As to quaternary structure, homotetramer; disulfide-linked.

It localises to the membrane. Acetyl group-binding receptor which shows a calcium-dependent binding to acetylated structures such as chitin, some N-acetylated carbohydrates, and amino acids. The sequence is that of Fibrinogen C domain-containing protein 1-B (fibcd1-b) from Xenopus laevis (African clawed frog).